The chain runs to 349 residues: Phosphoribosylformylglycinamidine cyclo-ligase (349 aa).

It belongs to the AIR synthase family.

It localises to the cytoplasm. It carries out the reaction 2-formamido-N(1)-(5-O-phospho-beta-D-ribosyl)acetamidine + ATP = 5-amino-1-(5-phospho-beta-D-ribosyl)imidazole + ADP + phosphate + H(+). Its pathway is purine metabolism; IMP biosynthesis via de novo pathway; 5-amino-1-(5-phospho-D-ribosyl)imidazole from N(2)-formyl-N(1)-(5-phospho-D-ribosyl)glycinamide: step 2/2. This Listeria monocytogenes serotype 4a (strain HCC23) protein is Phosphoribosylformylglycinamidine cyclo-ligase.